Reading from the N-terminus, the 378-residue chain is Protein RecA (378 aa).

Position 65 to 72 (65 to 72) interacts with ATP; sequence GPESSGKT. The disordered stretch occupies residues 325-378; that stretch reads AYGMDQTGEEDDQADDKSKDKATKPSDKSQAQAKPKKPVATETSLDLDDSKTDK. Residues 339-351 show a composition bias toward basic and acidic residues; that stretch reads DDKSKDKATKPSD.

Belongs to the RecA family.

The protein localises to the cytoplasm. Can catalyze the hydrolysis of ATP in the presence of single-stranded DNA, the ATP-dependent uptake of single-stranded DNA by duplex DNA, and the ATP-dependent hybridization of homologous single-stranded DNAs. It interacts with LexA causing its activation and leading to its autocatalytic cleavage. The polypeptide is Protein RecA (Lactiplantibacillus pentosus (Lactobacillus pentosus)).